We begin with the raw amino-acid sequence, 189 residues long: MKTCNLTDRMKVKMIMLLFQILAISTLQSDSAYIPDRYTQENVAVRGKATQSALASGGGAVLSLPGYAIDGNRDSDSSHGSCSHTTNGPNPWWRVDLLQVYTIASVTITNRGDCCGERITGAHILIGNSLENNGINNPQCSTVGIMTAGETRTFHCSRPMIGRYVTVYLPKTEYLQLCEVEVNALLPAN.

An N-terminal signal peptide occupies residues 1–31; it reads MKTCNLTDRMKVKMIMLLFQILAISTLQSDS. The interval 40–189 is F5/8 type C-like; that stretch reads QENVAVRGKA…VEVNALLPAN (150 aa). Asp-70, Asn-72, and Ser-81 together coordinate Ca(2+). Disulfide bonds link Cys-82–Cys-178, Cys-114–Cys-115, and Cys-140–Cys-156. Residues His-84 and Arg-111 each contribute to the alpha-L-fucose site. The Cell attachment site signature appears at 111-113; that stretch reads RGD. An alpha-L-fucose-binding site is contributed by Arg-118. Ca(2+)-binding residues include Cys-178 and Glu-179.

The protein belongs to the fucolectin family. As to quaternary structure, homotrimer. In terms of tissue distribution, gill mucous cells.

It localises to the secreted. Acts as a defensive agent. Recognizes blood group fucosylated oligosaccharides including A, B, H and Lewis B-type antigens. Does not recognize Lewis A antigen and has low affinity for monovalent haptens. The protein is Fucolectin-5 of Anguilla japonica (Japanese eel).